A 233-amino-acid polypeptide reads, in one-letter code: Orotidine 5'-phosphate decarboxylase (233 aa).

Substrate is bound by residues aspartate 11, lysine 34, 61 to 70 (DLKLHDIPNT), threonine 117, arginine 179, glutamine 188, glycine 208, and arginine 209. Lysine 63 serves as the catalytic Proton donor.

Belongs to the OMP decarboxylase family. Type 1 subfamily. Homodimer.

It carries out the reaction orotidine 5'-phosphate + H(+) = UMP + CO2. Its pathway is pyrimidine metabolism; UMP biosynthesis via de novo pathway; UMP from orotate: step 2/2. Functionally, catalyzes the decarboxylation of orotidine 5'-monophosphate (OMP) to uridine 5'-monophosphate (UMP). This chain is Orotidine 5'-phosphate decarboxylase, found in Streptococcus pneumoniae (strain Hungary19A-6).